The sequence spans 925 residues: MGSCFSFQIAVGDQTMNRIFDCLIGKSYIRTLEKNLRALQREMEDLRATQHEVQNKVAREESRHQQRLEAVQVWLDRVNSIDIECKDLLSVSPVELQKLCLCGLCTKYVCSSYKYGKKVFLLLEEVKILKSEGNFDEVSQPPPRSEVEERPTQPTIGQEEMLEKAWNRLMEDGVGIMGLHGMGGVGKTTLFKKIHNKFAEIGGTFDIVIWIVVSQGAKLSKLQEDIAEKLHLCDDLWKNKNESDKATDIHRVLKGKRFVLMLDDIWEKVDLEAIGIPYPSEVNKCKVAFTTRSREVCGEMGDHKPMQVNCLEPEDAWELFKNKVGDNTLSSDPVIVGLAREVAQKCRGLPLALNVIGETMASKTMVQEWEYAIDVLTRSAAEFSGMENKILPILKYSYDSLGDEHIKSCFLYCALFPEDGQIYTETLIDKLICEGFIGEDQVIKRARNKGYAMLGTLTRANLLTKVGTELANLLTKVSIYHCVMHDVVREMALWIASDFGKQKENFVVQASAGLHEIPEVKDWGAVRRMSLMRNEIEEITCESKCSELTTLFLQSNQLKNLSGEFIRYMQKLVVLDLSDNRDFNELPEQISGLVSLQYLDLSFTRIEQLPVGLKELKKLTFLDLAYTARLCSISGISRLLSLRVLSLLGSKVHGDASVLKELQQLENLQDLAITLSAELISLDQRLAKVISILGIEGFLQKPFDLSFLASMENLSSLWVKNSYFSEIKCRESETDSSYLHINPKIPCFTNLSRLDIVKCHSMKDLTWILFAPNLVVLFIEDSREVGEIINKEKATNLTSITPFLKLERLILCYLPKLESIYWSPLPFPLLLNIDVEECPKLRKLPLNATSAPKVEEFRILMYPPELEWEDEDTKNRFLPEMVSTSTSSKDPLLRNGIPRCLKSESTLLLLILLYLSSCRAFGLYN.

Residues 25–69 (GKSYIRTLEKNLRALQREMEDLRATQHEVQNKVAREESRHQQRLE) adopt a coiled-coil conformation. Residues 134–154 (NFDEVSQPPPRSEVEERPTQP) form a disordered region. Residues 139–442 (SQPPPRSEVE…CEGFIGEDQV (304 aa)) enclose the NB-ARC domain. Residue 181-188 (GMGGVGKT) participates in ATP binding. LRR repeat units lie at residues 525–546 (AVRRMSLMRNEIEEITCESKCS), 547–568 (ELTTLFLQSNQLKNLSGEFIRY), 571–594 (KLVVLDLSDNRDFNELPEQISGLV), 595–617 (SLQYLDLSFTRIEQLPVGLKELK), 618–640 (KLTFLDLAYTARLCSISGISRLL), and 641–663 (SLRVLSLLGSKVHGDASVLKELQ).

The protein belongs to the disease resistance NB-LRR family.

Its function is as follows. Probable disease resistance protein. In Arabidopsis thaliana (Mouse-ear cress), this protein is Probable disease resistance protein At1g61310.